An 818-amino-acid polypeptide reads, in one-letter code: Sodium/hydrogen exchanger 1 (818 aa).

Topologically, residues 1–98 (MLLWPGASGL…FPVLGIDYQH (98 aa)) are extracellular. A disordered region spans residues 44–76 (STIRGSEPPRERSIGDVTTAPPELAPESRPVNH). Asn75 carries an N-linked (GlcNAc...) asparagine glycan. The chain crosses the membrane as a helical span at residues 99-121 (VRIPFEIALWILLACLMKIGFHV). The Cytoplasmic segment spans residues 122 to 130 (IPTISSIVP). The helical transmembrane segment at 131–148 (ESCLLIVVGLLVGGLIKG) threads the bilayer. At 149-158 (VGETPPILQS) the chain is on the extracellular side. Residues 159-176 (EVFFLFLLPPIILDAGYF) form a helical membrane-spanning segment. The Cytoplasmic segment spans residues 177 to 186 (LPLRQFTENL). The helical transmembrane segment at 187–215 (GTILIFAVVGTLWNAFFLGGLMYAVCLVG) threads the bilayer. At 216–222 (GEQINNI) the chain is on the extracellular side. A helical transmembrane segment spans residues 223 to 249 (GLLENLLFGSIISAVDPVAVLAVFEEI). Topologically, residues 250-252 (HIN) are cytoplasmic. Residues 253–283 (ELLHILVFGESLLNDAVTVVLYHLFEEFANY) form a helical membrane-spanning segment. Residues 284–287 (DRVG) are Extracellular-facing. Residues 288–322 (IVDIILGFLSFFVVSLGGVFVGVVYGVIAAFTSRF) traverse the membrane as a helical segment. The Cytoplasmic portion of the chain corresponds to 323–328 (TSHIRV). Residues 329–341 (IEPLFVFLYSYMA) traverse the membrane as a helical segment. Residues 342-350 (YLSAELFHL) lie on the Extracellular side of the membrane. The chain crosses the membrane as a helical span at residues 351–371 (SGIMALIASGVVMRPYVEANI). Residues 372–373 (SH) lie on the Cytoplasmic side of the membrane. Residues 374–404 (KSHTTIKYFLKMWSSVSETLIFIFLGVSTVA) traverse the membrane as a helical segment. The Extracellular portion of the chain corresponds to 405 to 410 (GSHHWN). The helical transmembrane segment at 411-438 (WTFVISTLLFCLIARVLGVLGLTWFINK) threads the bilayer. Over 439-444 (FRIVKL) the chain is Cytoplasmic. Residues 445-469 (TPKDQFIIAYGGLRGAIAFSLGYLL) traverse the membrane as a helical segment. The Extracellular segment spans residues 470 to 475 (DKKHFP). A helical membrane pass occupies residues 476-505 (MCDLFLTAIITVIFFTVFVQGMTIRPLVDL). Positions 503–545 (VDLLAVKKKQETKRSINEEIHTQFLDHLLTGIEDICGHYGHHH) are interaction with TESC. Topologically, residues 506 to 818 (LAVKKKQETK…EGEPFIPKGQ (313 aa)) are cytoplasmic. A PI(4,5)P2-binding region region spans residues 509–516 (KKKQETKR). Residues 515–545 (KRSINEEIHTQFLDHLLTGIEDICGHYGHHH) are interaction with CHP2. The segment at 540 to 545 (HYGHHH) is confers pH-dependent PI(4,5)P2 binding. The PI(4,5)P2-binding region stretch occupies residues 552-560 (RFNKKYVKK). Ser599 and Ser602 each carry phosphoserine. Thr603 is subject to Phosphothreonine. A phosphoserine mark is found at Ser605 and Ser648. Residues 633-818 (KILRNNLQKT…EGEPFIPKGQ (186 aa)) are interaction with TESC. Residues 633-818 (KILRNNLQKT…EGEPFIPKGQ (186 aa)) form an interaction with CALM1 region. Residues 684-687 (LTVP) are interaction with PPP3CA. A phosphoserine mark is found at Ser693, Ser697, and Ser703. Residues 715 to 720 (PVITID) form an interaction with PPP3CA region. Phosphoserine occurs at positions 723, 726, and 729. The disordered stretch occupies residues 741 to 818 (VLGLSRDPGR…EGEPFIPKGQ (78 aa)). Thr782 carries the post-translational modification Phosphothreonine. Positions 785-794 (PSDSPSSQRI) are enriched in polar residues. Ser788, Ser790, and Ser799 each carry phosphoserine.

It belongs to the monovalent cation:proton antiporter 1 (CPA1) transporter (TC 2.A.36) family. As to quaternary structure, homodimer; dimerization is crucial for its function. Oligomer. Interacts with CALM in a calcium-dependent manner. Interacts with TESC. Interacts (via the juxtamembrane region of the cytoplasmic C-terminal domain) with CHP1; the interaction occurs at the plasma membrane in a calcium-dependent manner. Interacts with CHP2; the interaction occurs in a calcium-dependent manner. Interacts with EZR; regulates the cytoskeletal interactions of SLC9A1 and promotes stress fiber formation. Post-translationally, ubiquitinated, leading to its degradation by the proteasome. Ubiquitination is reduced by CHP1. In terms of processing, O-glycosylated. Palmitoylated; may play a major role in SLC9A1 regulation. Post-translationally, phosphorylation at Thr-782 increases SLC9A1 activity. Specifically dephosphorylated at Thr-782 by PPP3CA that negatively regulates SLC9A1 activity. Phosphorylation at Ser-648 by AKT1 reduces SLC9A1 binding to CALM1.

It is found in the cell membrane. It localises to the basolateral cell membrane. It catalyses the reaction Na(+)(in) + H(+)(out) = Na(+)(out) + H(+)(in). The enzyme catalyses Li(+)(out) + H(+)(in) = Li(+)(in) + H(+)(out). It carries out the reaction Li(+)(in) + Na(+)(out) = Li(+)(out) + Na(+)(in). With respect to regulation, activated at acidic pHs. Inhibited by amiloride and 5-amino-substituted derivatives. Inhibited by cariporide and eniporide. Phosphatidylinositol 4,5-bisphosphate (PI(4,5)P2) and phosphatidylinositol 3,4,5-trisphosphate (PI(3,4,5)P3) bind and differentially regulate SLC9A1 activity. Electroneutral Na(+) /H(+) antiporter that extrudes Na(+) in exchange for external protons driven by the inward sodium ion chemical gradient, protecting cells from acidification that occurs from metabolism. Exchanges intracellular H(+) ions for extracellular Na(+) in 1:1 stoichiometry. Plays a key role in maintening intracellular pH neutral and cell volume, and thus is important for cell growth, proliferation, migration and survival. In addition, can transport lithium Li(+) and also functions as a Na(+)/Li(+) antiporter. SLC9A1 also functions in membrane anchoring and organization of scaffolding complexes that coordinate signaling inputs. In Bos taurus (Bovine), this protein is Sodium/hydrogen exchanger 1 (SLC9A1).